Reading from the N-terminus, the 335-residue chain is Methionine import ATP-binding protein MetN 1 (335 aa).

The ABC transporter domain maps to 2 to 242 (IEFQNVHKTY…PKHPTTKRFV (241 aa)). 38–45 (GHSGAGKS) contributes to the ATP binding site.

Belongs to the ABC transporter superfamily. Methionine importer (TC 3.A.1.24) family. In terms of assembly, the complex is composed of two ATP-binding proteins (MetN), two transmembrane proteins (MetI) and a solute-binding protein (MetQ).

The protein resides in the cell inner membrane. The enzyme catalyses L-methionine(out) + ATP + H2O = L-methionine(in) + ADP + phosphate + H(+). The catalysed reaction is D-methionine(out) + ATP + H2O = D-methionine(in) + ADP + phosphate + H(+). Part of the ABC transporter complex MetNIQ involved in methionine import. Responsible for energy coupling to the transport system. This is Methionine import ATP-binding protein MetN 1 from Pseudomonas fluorescens (strain Pf0-1).